Consider the following 301-residue polypeptide: Phosphatidylglycerol--prolipoprotein diacylglyceryl transferase (301 aa).

7 consecutive transmembrane segments (helical) span residues 17–37 (LAVRWYGLMYLVAFIMAIVVG), 59–79 (MLFYGVLGTILGGRFGYVLFY), 97–117 (GGMSFHGGFLGVTFAMILFAW), 129–149 (FVAPMVPAGLAAGRLGNFING), 203–223 (PSQLYEIALEGVVLFLVLWLF), 230–250 (VGAASAVFLIGYGLARFTVEF), and 257–277 (FLGLLALGLSMGQWLSLPMII). Residue Arg-142 participates in a 1,2-diacyl-sn-glycero-3-phospho-(1'-sn-glycerol) binding.

This sequence belongs to the Lgt family.

The protein localises to the cell inner membrane. It carries out the reaction L-cysteinyl-[prolipoprotein] + a 1,2-diacyl-sn-glycero-3-phospho-(1'-sn-glycerol) = an S-1,2-diacyl-sn-glyceryl-L-cysteinyl-[prolipoprotein] + sn-glycerol 1-phosphate + H(+). Its pathway is protein modification; lipoprotein biosynthesis (diacylglyceryl transfer). Functionally, catalyzes the transfer of the diacylglyceryl group from phosphatidylglycerol to the sulfhydryl group of the N-terminal cysteine of a prolipoprotein, the first step in the formation of mature lipoproteins. In Paraburkholderia phymatum (strain DSM 17167 / CIP 108236 / LMG 21445 / STM815) (Burkholderia phymatum), this protein is Phosphatidylglycerol--prolipoprotein diacylglyceryl transferase.